The primary structure comprises 236 residues: MEYILEVERNLFLTLNGVQHPLLDGFFYLISAKWTWVIMSIAFLFFLFYKKPTKEALFIVGAVLLSVLICDQLSSSFFKPFFARFRPSHHPDFIDYVKTVYGYRGGKYGFISGHTTNYISLALFTSRIFRNKFYTWTIWSVVALVIYSRIYIGVHFITDIIPGIAVGLIVGHFVYKVYLYARSRWLGASCPAHPSAVYAGDSIRLWTLSLIGFVFAMLCMSRQLTEILQYYVFLLF.

Transmembrane regions (helical) follow at residues 26-46, 58-78, 134-153, 160-182, and 200-220; these read FFYL…FLFF, FIVG…SSFF, YTWT…IYIG, IIPG…LYAR, and GDSI…MLCM.

It belongs to the lipid A LpxF 4'-phosphatase family.

It is found in the cell inner membrane. The protein operates within bacterial outer membrane biogenesis; LPS lipid A biosynthesis. Removes the 4'-phosphate group from lipid A species. Absence of phosphate groups in lipid A renders the bacteria resistant to host-derived cationic antimicrobial peptides (CAMP) and allows it to camouflage itself from the host innate immune response. Removal of the 4'-phosphate may be required to generate the substrate for deacylation of the pentaacyl lipid A to the tetraccylated lipid A species. This chain is Lipid A 4'-phosphatase, found in Porphyromonas gingivalis (strain ATCC 33277 / DSM 20709 / CIP 103683 / JCM 12257 / NCTC 11834 / 2561).